The sequence spans 440 residues: MESQQLSQHSPISHGSACASVTSKEVHTNQDPLDVSASKIQEYDKASTKANSQQTTTPASSAVPENPHHASPQTAQSHSPQNGPYPQQCMMTQNQANPSDWSFYGRPSMIPYTPYQMSPMYFPPGPHSQFPQYPSSVGTPLSTPSPESGNTFTDSSSADSDMTSTKKYVRPPPMLTSPNDFLNWVKTYIKFLQNSNLGGIIPTVNGKPVRQITDDELTFLYNTFQIFAPSQFLPTWVKDILSVDYTDIMKILSKSIEKMQSDTQEANDIVTLANLQYNGSTPADAFETKVTNIIDRLNNNGIHINNKVACQLIMRGLSGEYKFLRYTRHRHLNMTVAELFLDIHAIYEEQQGSRNSKPNYRRNPSDEKNDSRSYTNTTKPKVIARNPQKTNNSKSKTARAHNVSTSNNSPSTDNDSISKSTTEPIQLNNKHDLHLRPETY.

Polar residues-rich tracts occupy residues 1–23, 48–60, 71–97, and 129–152; these read MESQ…SVTS, TKAN…TPAS, SPQT…NQAN, and QFPQ…GNTF. 3 disordered regions span residues 1 to 97, 129 to 171, and 352 to 440; these read MESQ…NQAN, QFPQ…YVRP, and GSRN…PETY. Positions 153–165 are enriched in low complexity; sequence TDSSSADSDMTST. Positions 299–401 are RNA-binding; that stretch reads NNGIHINNKV…NSKSKTARAH (103 aa). Residues 402–418 show a composition bias toward low complexity; the sequence is NVSTSNNSPSTDNDSIS. Phosphoserine is present on S416. Positions 419–428 are enriched in polar residues; the sequence is KSTTEPIQLN. The span at 429-440 shows a compositional bias: basic and acidic residues; it reads NKHDLHLRPETY.

In terms of assembly, homotrimer.

It localises to the cytoplasm. In terms of biological role, capsid protein (CA) is the structural component of the virus-like particle (VLP), forming the shell that encapsulates the retrotransposons dimeric RNA genome. The particles are assembled from trimer-clustered units and there are holes in the capsid shells that allow for the diffusion of macromolecules. CA also has nucleocapsid-like chaperone activity, promoting primer tRNA(i)-Met annealing to the multipartite primer-binding site (PBS), dimerization of Ty1 RNA and initiation of reverse transcription. The protein is Transposon Ty1-NL2 Gag polyprotein (TY1A-NL2) of Saccharomyces cerevisiae (strain ATCC 204508 / S288c) (Baker's yeast).